A 273-amino-acid chain; its full sequence is NAD-dependent protein deacylase (273 aa).

The Deacetylase sirtuin-type domain occupies 1–269; the sequence is MNLDNAIHEA…PRIVEQVKKI (269 aa). Residues 25 to 44 and 107 to 110 each bind NAD(+); these read GAGV…GGVW and QNID. H125 (proton acceptor) is an active-site residue. Zn(2+)-binding residues include C133, C136, C173, and C176. NAD(+) contacts are provided by residues 211 to 213, 237 to 239, and T255; these read GTS and NPN.

The protein belongs to the sirtuin family. Class III subfamily. Zn(2+) serves as cofactor.

The protein localises to the cytoplasm. It carries out the reaction N(6)-acetyl-L-lysyl-[protein] + NAD(+) + H2O = 2''-O-acetyl-ADP-D-ribose + nicotinamide + L-lysyl-[protein]. NAD-dependent protein deacetylase which modulates the activities of several proteins which are inactive in their acetylated form. The polypeptide is NAD-dependent protein deacylase (cobB) (Desulfosudis oleivorans (strain DSM 6200 / JCM 39069 / Hxd3) (Desulfococcus oleovorans)).